A 365-amino-acid chain; its full sequence is Endophilin-B1 (365 aa).

An N-acetylmethionine modification is found at Met-1. Residues 1–30 (MNIMDFNVKKLAADAGTFLSRAVQFTEEKL) form a membrane-binding amphipathic helix region. The segment at 1-37 (MNIMDFNVKKLAADAGTFLSRAVQFTEEKLGQAEKTE) is required for membrane binding. In terms of domain architecture, BAR spans 27–261 (EEKLGQAEKT…LGSFPSNYLS (235 aa)). Thr-145 is modified (phosphothreonine; by CDK5). Residues 155–195 (YKTIAKERKLLQNKRLDLDAAKTRLKKAKAAETRNSSEQEL) adopt a coiled-coil conformation. Positions 305 to 365 (SGSRKARVLY…VPITYLELLN (61 aa)) constitute an SH3 domain.

Belongs to the endophilin family. Homodimer, and heterodimer with SH3GLB2. Binds BAX; induction of apoptosis augments BAX binding. Binds DNM1, HTT, AMPH, BIN1 and ARFGAP1. Interacts with UVRAG; UVRAG bridges the interaction to BECN1 indicative for an association with the PI3K complex II (PI3KC3-C2). Phosphorylated at Thr-145 by CDK5; this phosphorylation is required for autophagy induction in starved neurons and facilitates homodimerization. Highly expressed in heart, skeletal muscle, kidney and placenta. Detected at lower levels in brain, colon, thymus, spleen, liver, small intestine, lung and peripheral blood leukocytes.

The protein localises to the cytoplasm. It is found in the golgi apparatus membrane. Its subcellular location is the mitochondrion outer membrane. It localises to the cytoplasmic vesicle. The protein resides in the autophagosome membrane. The protein localises to the midbody. Functionally, may be required for normal outer mitochondrial membrane dynamics. Required for coatomer-mediated retrograde transport in certain cells. May recruit other proteins to membranes with high curvature. May promote membrane fusion. Involved in activation of caspase-dependent apoptosis by promoting BAX/BAK1 activation. Isoform 1 acts proapoptotic in fibroblasts. Involved in caspase-independent apoptosis during nutrition starvation and involved in the regulation of autophagy. Activates lipid kinase activity of PIK3C3 during autophagy probably by associating with the PI3K complex II (PI3KC3-C2). Associated with PI3KC3-C2 during autophagy may regulate the trafficking of ATG9A from the Golgi complex to the peripheral cytoplasm for the formation of autophagosomes by inducing Golgi membrane tubulation and fragmentation. Involved in regulation of degradative endocytic trafficking and cytokinesis, probably in the context of PI3KC3-C2. Isoform 2 acts antiapoptotic in neuronal cells; involved in maintenance of mitochondrial morphology and promotes neuronal viability. This is Endophilin-B1 (SH3GLB1) from Homo sapiens (Human).